The sequence spans 371 residues: tRNA 2-selenouridine synthase (371 aa).

Residues 12–135 (FLDDVPMMDM…MRTFLLDTTQ (124 aa)) form the Rhodanese domain. Cys95 acts as the S-selanylcysteine intermediate in catalysis.

The protein belongs to the SelU family. As to quaternary structure, monomer.

The enzyme catalyses 5-methylaminomethyl-2-thiouridine(34) in tRNA + selenophosphate + (2E)-geranyl diphosphate + H2O + H(+) = 5-methylaminomethyl-2-selenouridine(34) in tRNA + (2E)-thiogeraniol + phosphate + diphosphate. It carries out the reaction 5-methylaminomethyl-2-thiouridine(34) in tRNA + (2E)-geranyl diphosphate = 5-methylaminomethyl-S-(2E)-geranyl-thiouridine(34) in tRNA + diphosphate. The catalysed reaction is 5-methylaminomethyl-S-(2E)-geranyl-thiouridine(34) in tRNA + selenophosphate + H(+) = 5-methylaminomethyl-2-(Se-phospho)selenouridine(34) in tRNA + (2E)-thiogeraniol. It catalyses the reaction 5-methylaminomethyl-2-(Se-phospho)selenouridine(34) in tRNA + H2O = 5-methylaminomethyl-2-selenouridine(34) in tRNA + phosphate. Functionally, involved in the post-transcriptional modification of the uridine at the wobble position (U34) of tRNA(Lys), tRNA(Glu) and tRNA(Gln). Catalyzes the conversion of 2-thiouridine (S2U-RNA) to 2-selenouridine (Se2U-RNA). Acts in a two-step process involving geranylation of 2-thiouridine (S2U) to S-geranyl-2-thiouridine (geS2U) and subsequent selenation of the latter derivative to 2-selenouridine (Se2U) in the tRNA chain. The chain is tRNA 2-selenouridine synthase from Pseudomonas entomophila (strain L48).